The following is an 86-amino-acid chain: Large ribosomal subunit protein bL27 (86 aa).

Over residues 1–10 (MAQKKGGGST) the composition is skewed to gly residues. Residues 1 to 21 (MAQKKGGGSTRNGRDSESKRL) are disordered.

This sequence belongs to the bacterial ribosomal protein bL27 family.

The protein is Large ribosomal subunit protein bL27 of Cupriavidus pinatubonensis (strain JMP 134 / LMG 1197) (Cupriavidus necator (strain JMP 134)).